An 88-amino-acid chain; its full sequence is Small ribosomal subunit protein uS17 (88 aa).

The protein belongs to the universal ribosomal protein uS17 family. As to quaternary structure, part of the 30S ribosomal subunit.

Its function is as follows. One of the primary rRNA binding proteins, it binds specifically to the 5'-end of 16S ribosomal RNA. In Prochlorococcus marinus subsp. pastoris (strain CCMP1986 / NIES-2087 / MED4), this protein is Small ribosomal subunit protein uS17.